A 464-amino-acid chain; its full sequence is Na(+)/H(+) antiporter NhaA 1 (464 aa).

11 helical membrane-spanning segments follow: residues 41 to 61, 85 to 105, 121 to 141, 150 to 170, 180 to 200, 207 to 227, 234 to 254, 329 to 349, 363 to 383, 399 to 419, and 428 to 448; these read GGLI…SPLA, LHHW…GLEL, VLPI…YMSL, GWGI…ALLA, FLVA…AVFY, SFLI…MIGI, FFVG…ATLA, VAFF…IDFG, VVFG…WLAI, IIGA…IAEL, and IIQA…AGYL.

Belongs to the NhaA Na(+)/H(+) (TC 2.A.33) antiporter family.

It localises to the cell inner membrane. The enzyme catalyses Na(+)(in) + 2 H(+)(out) = Na(+)(out) + 2 H(+)(in). Its function is as follows. Na(+)/H(+) antiporter that extrudes sodium in exchange for external protons. In Saccharophagus degradans (strain 2-40 / ATCC 43961 / DSM 17024), this protein is Na(+)/H(+) antiporter NhaA 1.